Here is a 652-residue protein sequence, read N- to C-terminus: Neuroendocrine convertase 2 (652 aa).

Residues 1 to 22 form the signal peptide; sequence MKNTHVDLICVFLSIFIGIGEA. A propeptide spanning residues 23-107 is cleaved from the precursor; the sequence is VDVYTNHFHV…QLKGYTRTKR (85 aa). A Peptidase S8 domain is found at 136 to 481; sequence QWYLKNTGQA…FGVLDAAEMV (346 aa). Asn-167 carries an N-linked (GlcNAc...) asparagine glycan. Active-site charge relay system residues include Asp-174 and His-215. Disulfide bonds link Cys-232–Cys-382 and Cys-324–Cys-354. An N-linked (GlcNAc...) asparagine glycan is attached at Asn-290. Ser-390 functions as the Charge relay system in the catalytic mechanism. A glycan (N-linked (GlcNAc...) asparagine) is linked at Asn-451. Residues 489 to 625 form the P/Homo B domain; the sequence is TSPPRYHCTA…ELMLHGTREA (137 aa). Cys-496 and Cys-522 are disulfide-bonded. Positions 501 to 652 are required for ubiquitination-mediated degradation; sequence IDTPHEIPAD…TVQKAHKRSH (152 aa). The N-linked (GlcNAc...) asparagine glycan is linked to Asn-542.

It belongs to the peptidase S8 family. Furin subfamily. In terms of assembly, interacts (via C-terminus) with F-box protein fsn-1 (via SPRY domain); the interaction results in egl-3 proteasomal degradation. Post-translationally, ubiquitinated. As to expression, expressed in head and tail ganglia. Expressed in neurons including mechanosensory and motor neurons, and interneurons (at protein level). Expressed in the nerve ring, ventral nerve cord and intestine.

The protein resides in the cell projection. It localises to the axon. The protein localises to the cytoplasmic vesicle. Its subcellular location is the secretory vesicle lumen. It is found in the secreted. The catalysed reaction is Release of protein hormones and neuropeptides from their precursors, generally by hydrolysis of -Lys-Arg-|- bonds.. In terms of biological role, serine endoprotease which cleaves preproteins at paired basic amino acids. Processes FMRFamide-like (flp) and neuropeptide-like protein (nlp) neuropeptides. Probably by processing flp-1 and flp-18, modulates the neuronal excitation-inhibition balance and thus the level of activity of the locomotor circuit. Regulates sensitivity to mechanosensory stimuli. By processing neuropeptides, modulates basal acetylcholine release at the ventral cord neuromuscular junctions. Probably by processing flp neuropeptides, regulates the turning step of male mating behavior. Cleaves pro-insulin-like proteins ins-3, ins-4 and ins-6 into their mature active forms. Together with convertase kpc-1, cleaves pro-insulin-like protein ins-18. By controlling ins-4 and ins-6 processing and thus the activation of the daf-2/InsR pathway, negatively modulates synapse development and synaptic transmission at neuromuscular junctions. Similarly, by controlling ins-4 and ins-6 processing, negatively regulates dauer formation under optimal environmental conditions. Under adverse environmental conditions, may promote dauer formation by processing ins-18, a daf-2/InsR antagonist. May cleave dense-core vesicle membrane protein ida-1. Involved in egg-laying, fat storage and locomotion. This chain is Neuroendocrine convertase 2, found in Caenorhabditis elegans.